The chain runs to 418 residues: Bifunctional protein GlmU (418 aa).

Residues 1-236 form a pyrophosphorylase region; it reads MAAVIVLAAG…VWQTEGVNDR (236 aa). UDP-N-acetyl-alpha-D-glucosamine is bound by residues 7-10, K21, Q74, 79-80, 102-104, G141, E155, N170, and N234; these read LAAG, GT, and YGD. D104 lines the Mg(2+) pocket. Mg(2+) is bound at residue N234. The tract at residues 237-257 is linker; sequence VQLARMNAEVNRRIVTGWMRA. Residues 258-418 form an N-acetyltransferase region; the sequence is GVTIIDPTST…DDTLNPEADQ (161 aa). Positions 339 and 357 each coordinate UDP-N-acetyl-alpha-D-glucosamine. Residue H369 is the Proton acceptor of the active site. Y372 is a UDP-N-acetyl-alpha-D-glucosamine binding site. Position 386 (A386) interacts with acetyl-CoA.

It in the N-terminal section; belongs to the N-acetylglucosamine-1-phosphate uridyltransferase family. In the C-terminal section; belongs to the transferase hexapeptide repeat family. Homotrimer. Mg(2+) is required as a cofactor.

It localises to the cytoplasm. It carries out the reaction alpha-D-glucosamine 1-phosphate + acetyl-CoA = N-acetyl-alpha-D-glucosamine 1-phosphate + CoA + H(+). The catalysed reaction is N-acetyl-alpha-D-glucosamine 1-phosphate + UTP + H(+) = UDP-N-acetyl-alpha-D-glucosamine + diphosphate. The protein operates within nucleotide-sugar biosynthesis; UDP-N-acetyl-alpha-D-glucosamine biosynthesis; N-acetyl-alpha-D-glucosamine 1-phosphate from alpha-D-glucosamine 6-phosphate (route II): step 2/2. Its pathway is nucleotide-sugar biosynthesis; UDP-N-acetyl-alpha-D-glucosamine biosynthesis; UDP-N-acetyl-alpha-D-glucosamine from N-acetyl-alpha-D-glucosamine 1-phosphate: step 1/1. It participates in bacterial outer membrane biogenesis; LPS lipid A biosynthesis. Functionally, catalyzes the last two sequential reactions in the de novo biosynthetic pathway for UDP-N-acetylglucosamine (UDP-GlcNAc). The C-terminal domain catalyzes the transfer of acetyl group from acetyl coenzyme A to glucosamine-1-phosphate (GlcN-1-P) to produce N-acetylglucosamine-1-phosphate (GlcNAc-1-P), which is converted into UDP-GlcNAc by the transfer of uridine 5-monophosphate (from uridine 5-triphosphate), a reaction catalyzed by the N-terminal domain. This Cutibacterium acnes (strain DSM 16379 / KPA171202) (Propionibacterium acnes) protein is Bifunctional protein GlmU.